We begin with the raw amino-acid sequence, 304 residues long: D-alanine--D-alanine ligase (304 aa).

Residues lysine 101–lysine 298 enclose the ATP-grasp domain. An ATP-binding site is contributed by glutamate 131–glutamine 184. Mg(2+)-binding residues include aspartate 253, glutamate 265, and asparagine 267.

It belongs to the D-alanine--D-alanine ligase family. Mg(2+) is required as a cofactor. Mn(2+) serves as cofactor.

It is found in the cytoplasm. It catalyses the reaction 2 D-alanine + ATP = D-alanyl-D-alanine + ADP + phosphate + H(+). It functions in the pathway cell wall biogenesis; peptidoglycan biosynthesis. Its function is as follows. Cell wall formation. In Pelagibacter ubique (strain HTCC1062), this protein is D-alanine--D-alanine ligase.